The chain runs to 178 residues: Large ribosomal subunit protein uL6 (178 aa).

It belongs to the universal ribosomal protein uL6 family. As to quaternary structure, part of the 50S ribosomal subunit.

Its function is as follows. This protein binds to the 23S rRNA, and is important in its secondary structure. It is located near the subunit interface in the base of the L7/L12 stalk, and near the tRNA binding site of the peptidyltransferase center. This Streptococcus mutans serotype c (strain ATCC 700610 / UA159) protein is Large ribosomal subunit protein uL6.